A 229-amino-acid chain; its full sequence is Putative N-acetylmannosamine-6-phosphate 2-epimerase (229 aa).

The protein belongs to the NanE family.

It catalyses the reaction an N-acyl-D-glucosamine 6-phosphate = an N-acyl-D-mannosamine 6-phosphate. It functions in the pathway amino-sugar metabolism; N-acetylneuraminate degradation; D-fructose 6-phosphate from N-acetylneuraminate: step 3/5. In terms of biological role, converts N-acetylmannosamine-6-phosphate (ManNAc-6-P) to N-acetylglucosamine-6-phosphate (GlcNAc-6-P). The polypeptide is Putative N-acetylmannosamine-6-phosphate 2-epimerase (Escherichia coli O127:H6 (strain E2348/69 / EPEC)).